Reading from the N-terminus, the 124-residue chain is Small ribosomal subunit protein uS13 (124 aa).

A disordered region spans residues 94–124; that stretch reads GLPLRGQRTKNNSRTRKGRRKTVANKKKATK. Positions 100 to 124 are enriched in basic residues; that stretch reads QRTKNNSRTRKGRRKTVANKKKATK.

The protein belongs to the universal ribosomal protein uS13 family. In terms of assembly, part of the 30S ribosomal subunit. Forms a loose heterodimer with protein S19. Forms two bridges to the 50S subunit in the 70S ribosome.

Its function is as follows. Located at the top of the head of the 30S subunit, it contacts several helices of the 16S rRNA. In the 70S ribosome it contacts the 23S rRNA (bridge B1a) and protein L5 of the 50S subunit (bridge B1b), connecting the 2 subunits; these bridges are implicated in subunit movement. Contacts the tRNAs in the A and P-sites. In Christiangramia forsetii (strain DSM 17595 / CGMCC 1.15422 / KT0803) (Gramella forsetii), this protein is Small ribosomal subunit protein uS13.